We begin with the raw amino-acid sequence, 325 residues long: Bifunctional nuclease 2 (325 aa).

Residues 119 to 254 form the BFN domain; the sequence is CVHNNSQGRN…SLAYSDGIRS (136 aa). The region spanning 285 to 320 is the UVR domain; sequence EAQEFGLIRNMLIAAVEERYKDAATWRDKLMLLRSK.

The protein belongs to the bifunctional nuclease family.

Its subcellular location is the nucleus. Functionally, bifunctional nuclease with both RNase and DNase activities. Involved in basal defense response. Participates in abscisic acid-derived callose deposition following infection by a necrotrophic pathogen. This is Bifunctional nuclease 2 (BBD2) from Oryza sativa subsp. japonica (Rice).